Here is a 292-residue protein sequence, read N- to C-terminus: Pyridoxal 5'-phosphate synthase subunit PdxS (292 aa).

Residue Asp22 participates in D-ribose 5-phosphate binding. Lys79 functions as the Schiff-base intermediate with D-ribose 5-phosphate in the catalytic mechanism. Residue Gly151 coordinates D-ribose 5-phosphate. A D-glyceraldehyde 3-phosphate-binding site is contributed by Arg163. Residues Gly212 and 233 to 234 (GS) each bind D-ribose 5-phosphate.

Belongs to the PdxS/SNZ family. In the presence of PdxT, forms a dodecamer of heterodimers.

The enzyme catalyses aldehydo-D-ribose 5-phosphate + D-glyceraldehyde 3-phosphate + L-glutamine = pyridoxal 5'-phosphate + L-glutamate + phosphate + 3 H2O + H(+). It participates in cofactor biosynthesis; pyridoxal 5'-phosphate biosynthesis. Functionally, catalyzes the formation of pyridoxal 5'-phosphate from ribose 5-phosphate (RBP), glyceraldehyde 3-phosphate (G3P) and ammonia. The ammonia is provided by the PdxT subunit. Can also use ribulose 5-phosphate and dihydroxyacetone phosphate as substrates, resulting from enzyme-catalyzed isomerization of RBP and G3P, respectively. The polypeptide is Pyridoxal 5'-phosphate synthase subunit PdxS (Thermoanaerobacter pseudethanolicus (strain ATCC 33223 / 39E) (Clostridium thermohydrosulfuricum)).